The following is a 228-amino-acid chain: Woronin body membrane protein wscA (228 aa).

4 helical membrane-spanning segments follow: residues Met89–Gln109, Leu130–Ala150, Ala162–Ala182, and Phe185–Tyr205.

Belongs to the peroxisomal membrane protein PXMP2/4 family. In terms of assembly, self-assembles into detergent-resistant oligomers and forms a complex with hexA assemblies.

It is found in the peroxisome membrane. The protein localises to the cell septum. Functionally, woronin sorting complex protein involved in both Woronin bodies (WB) formation and inherence. Localizes to large peroxisome membranes where it self-assembles into detergent-resistant oligomers that envelop hex-1 assemblies, producing asymmetrical nascent WBs. These structures are then delivered to the cell cortex, which permits partitioning of the nascent WB and WB inheritance. The chain is Woronin body membrane protein wscA from Aspergillus fumigatus (strain ATCC MYA-4609 / CBS 101355 / FGSC A1100 / Af293) (Neosartorya fumigata).